We begin with the raw amino-acid sequence, 572 residues long: MNSALAAGLQIGFVILALAIAYVPLGDYMARVFTGPHSLRASGLSTIKHSRVERLIYRVGRVDPETEQTWVGYTLSLLGFSFASVIFLYVLQRIQGVLPLSGGLGAVSPAVAFNTAVSFVTNTNWQSYTPETTMSNLTQMVGLAVQNFVSAAVGLTVAVALIRGVVRTTSGGELGNFWVDLVRGSLRILLPLSFAVALILLSQGTIQSVYTHFEATALDGTAQHIALAPVASQEAIKEIGTNGGGILGANSAHPFENPTPLSNVIEILAILIIPVCLTRTYSTMVGDKRQGLTVLSVMGTLFGGMLALVTWAESSPRGIAAQAAGAMMEGKEVRFGIPGSALFAVSTTGTSTGAVDAAHDSFTAAGGGALILNMLLGEIAPGGVGTGLYGILVLAIIAVFVGGLLVGRTPEFLGKKIGRRQITMAALSVLVMPALVLVGTGISVALSTTTGYQGNSGDPGTPSSIHGFSEVLYAYASAANNNGSAFGGLTVTSHWFQASLGMAMLLGRFLPIIFTLALAGSLATQRKTPASAGTLHTHGPMFAGLHTGTVLLVAALTFFPALALGPIAEAVL.

The next 11 membrane-spanning stretches (helical) occupy residues 5-25 (LAAG…YVPL), 71-91 (VGYT…LYVL), 97-117 (VLPL…NTAV), 142-162 (GLAV…VALI), 188-208 (ILLP…TIQS), 258-278 (PTPL…VCLT), 292-312 (LTVL…VTWA), 387-407 (GLYG…LLVG), 422-442 (ITMA…GTGI), 500-520 (LGMA…ALAG), and 548-568 (GTVL…GPIA).

The protein belongs to the KdpA family. As to quaternary structure, the system is composed of three essential subunits: KdpA, KdpB and KdpC.

It localises to the cell membrane. Functionally, part of the high-affinity ATP-driven potassium transport (or Kdp) system, which catalyzes the hydrolysis of ATP coupled with the electrogenic transport of potassium into the cytoplasm. This subunit binds the extracellular potassium ions and delivers the ions to the membrane domain of KdpB through an intramembrane tunnel. This chain is Potassium-transporting ATPase potassium-binding subunit, found in Mycobacteroides abscessus (strain ATCC 19977 / DSM 44196 / CCUG 20993 / CIP 104536 / JCM 13569 / NCTC 13031 / TMC 1543 / L948) (Mycobacterium abscessus).